A 299-amino-acid polypeptide reads, in one-letter code: MLYLIGLGLSYESDITVRGLETVKKCKRVYLEAYTSILMAANQESLEKFYGREIILADRELVETGSDDILKDADKEDVAFLVVGDPFGATTHTDLVIRARELGIKVETIHNASVMNAVGACGLQLYQFGQTVSLVFFTDSWKPDSFYGKIMENRKIGLHTLLLLDIKVKEQSIENMARGRLIYEPPRYMDIATAAQQLLEIESIRQEQAYTPNTPCVAISRLGSPTQTFKAGTLQELSEYDSGEPLHSLVMLGRQVHELELEYLYQFVDDKEKFKKFVEQDQEFFKPAPYVPPEDVDSE.

S-adenosyl-L-methionine contacts are provided by residues Leu-9, Asp-85, Gly-88, 113–114 (SV), Leu-164, Leu-222, and His-247.

The protein belongs to the diphthine synthase family.

It is found in the cytoplasm. The catalysed reaction is 2-[(3S)-amino-3-carboxypropyl]-L-histidyl-[translation elongation factor 2] + 4 S-adenosyl-L-methionine = diphthine methyl ester-[translation elongation factor 2] + 4 S-adenosyl-L-homocysteine + 3 H(+). Its pathway is protein modification; peptidyl-diphthamide biosynthesis. S-adenosyl-L-methionine-dependent methyltransferase that catalyzes four methylations of the modified target histidine residue in translation elongation factor 2 (EF-2), to form an intermediate called diphthine methyl ester. The four successive methylation reactions represent the second step of diphthamide biosynthesis. The protein is Diphthine methyl ester synthase 1 (DPH5) of Candida albicans (strain SC5314 / ATCC MYA-2876) (Yeast).